A 346-amino-acid polypeptide reads, in one-letter code: Alkylated DNA repair protein ALKBH8 homolog (346 aa).

The disordered stretch occupies residues methionine 1 to proline 21. Residues serine 12–proline 21 show a composition bias toward low complexity. One can recognise an RRM domain in the interval serine 24–leucine 102. Residues asparagine 208–arginine 328 form the Fe2OG dioxygenase domain. Fe cation is bound by residues histidine 226, aspartate 228, and histidine 298. 2-oxoglutarate-binding residues include arginine 319 and arginine 325.

It belongs to the alkB family. Fe(2+) is required as a cofactor.

Functionally, binds tRNA and catalyzes the iron and alpha-ketoglutarate dependent hydroxylation of 5-methylcarboxymethyl uridine at the wobble position of the anticodon loop in tRNA via its dioxygenase domain, giving rise to 5-(S)-methoxycarbonylhydroxymethyluridine. This Arabidopsis thaliana (Mouse-ear cress) protein is Alkylated DNA repair protein ALKBH8 homolog.